Reading from the N-terminus, the 474-residue chain is Cysteine protease ATG4A (474 aa).

Residues 1–32 (MTSLPGRGVSPSSSDPLCEGNAAPSSSSSSGQ) form a disordered region. C161 functions as the Nucleophile in the catalytic mechanism. Active-site residues include D358 and H360. Residues 439-449 (KQMYNEESSSG) show a composition bias toward polar residues. The interval 439 to 474 (KQMYNEESSSGDGMDSINVEGLDGSGETGEEEWQIL) is disordered.

The protein belongs to the peptidase C54 family. In terms of assembly, interacts with ATG8.

The protein resides in the cytoplasm. The enzyme catalyses [protein]-C-terminal L-amino acid-glycyl-phosphatidylethanolamide + H2O = [protein]-C-terminal L-amino acid-glycine + a 1,2-diacyl-sn-glycero-3-phosphoethanolamine. Functionally, cysteine protease that plays a key role in autophagy by mediating both proteolytic activation and delipidation of ATG8 family proteins. The protease activity is required for proteolytic activation of ATG8 family proteins: cleaves the C-terminal amino acid of ATG8 proteins to reveal a C-terminal glycine. Exposure of the glycine at the C-terminus is essential for ATG8 proteins conjugation to phosphatidylethanolamine (PE) and insertion to membranes, which is necessary for autophagy. In addition to the protease activity, also mediates delipidation of PE-conjugated ATG8 proteins. This is Cysteine protease ATG4A (ATG4A) from Oryza sativa subsp. japonica (Rice).